The chain runs to 86 residues: Neurotoxin 3FTx-8a (86 aa).

The N-terminal stretch at 1–21 (MKTLLLTLVVVTIVCLDLGYT) is a signal peptide. 5 disulfide bridges follow: cysteine 24–cysteine 45, cysteine 27–cysteine 32, cysteine 38–cysteine 63, cysteine 67–cysteine 78, and cysteine 79–cysteine 84.

Expressed by the venom gland.

Its subcellular location is the secreted. Its function is as follows. Binds with low affinity to muscular (alpha-1-beta-1-delta-epsilon/CHRNA1-CHRNB1-CHRND-CHRNE) and very low affinity to neuronal (alpha-7/CHRNA7) nicotinic acetylcholine receptor (nAChR). In Bungarus fasciatus (Banded krait), this protein is Neurotoxin 3FTx-8a.